Consider the following 73-residue polypeptide: Translation initiation factor IF-1 (73 aa).

The region spanning 1–73 is the S1-like domain; sequence MAKKQGAIEI…TRGRIVYRYK (73 aa).

This sequence belongs to the IF-1 family. As to quaternary structure, component of the 30S ribosomal translation pre-initiation complex which assembles on the 30S ribosome in the order IF-2 and IF-3, IF-1 and N-formylmethionyl-tRNA(fMet); mRNA recruitment can occur at any time during PIC assembly.

The protein localises to the cytoplasm. One of the essential components for the initiation of protein synthesis. Stabilizes the binding of IF-2 and IF-3 on the 30S subunit to which N-formylmethionyl-tRNA(fMet) subsequently binds. Helps modulate mRNA selection, yielding the 30S pre-initiation complex (PIC). Upon addition of the 50S ribosomal subunit IF-1, IF-2 and IF-3 are released leaving the mature 70S translation initiation complex. This chain is Translation initiation factor IF-1, found in Streptomyces coelicolor (strain ATCC BAA-471 / A3(2) / M145).